The primary structure comprises 350 residues: Biotin synthase (350 aa).

The Radical SAM core domain occupies 41–268; the sequence is NEVQISRLLS…KSRVRLSAGR (228 aa). Cys56, Cys60, and Cys63 together coordinate [4Fe-4S] cluster. [2Fe-2S] cluster is bound by residues Cys100, Cys131, Cys191, and Arg263.

The protein belongs to the radical SAM superfamily. Biotin synthase family. As to quaternary structure, homodimer. [4Fe-4S] cluster is required as a cofactor. [2Fe-2S] cluster serves as cofactor.

It carries out the reaction (4R,5S)-dethiobiotin + (sulfur carrier)-SH + 2 reduced [2Fe-2S]-[ferredoxin] + 2 S-adenosyl-L-methionine = (sulfur carrier)-H + biotin + 2 5'-deoxyadenosine + 2 L-methionine + 2 oxidized [2Fe-2S]-[ferredoxin]. The protein operates within cofactor biosynthesis; biotin biosynthesis; biotin from 7,8-diaminononanoate: step 2/2. Catalyzes the conversion of dethiobiotin (DTB) to biotin by the insertion of a sulfur atom into dethiobiotin via a radical-based mechanism. In Shewanella piezotolerans (strain WP3 / JCM 13877), this protein is Biotin synthase.